We begin with the raw amino-acid sequence, 352 residues long: NAD(P)H oxidoreductase RTN4IP1, mitochondrial (352 aa).

The 338-residue stretch at 11–348 (ESLDLLEYKT…NSNSNGKIII (338 aa)) folds into the Enoyl reductase (ER) domain. Residues valine 165, tyrosine 206, alanine 296, and phenylalanine 298 each coordinate NADPH.

It belongs to the zinc-containing alcohol dehydrogenase family. Quinone oxidoreductase subfamily.

Its subcellular location is the mitochondrion matrix. It carries out the reaction a quinone + NADH + H(+) = a quinol + NAD(+). It catalyses the reaction a quinone + NADPH + H(+) = a quinol + NADP(+). The protein operates within cofactor biosynthesis; ubiquinone biosynthesis. Functionally, NAD(P)H oxidoreductase involved in the ubiquinone biosynthetic pathway. Required for the O-methyltransferase activity of coq3. This Dictyostelium discoideum (Social amoeba) protein is NAD(P)H oxidoreductase RTN4IP1, mitochondrial (rtn4ip1).